The sequence spans 431 residues: Glutamate-1-semialdehyde 2,1-aminomutase (431 aa).

K266 is modified (N6-(pyridoxal phosphate)lysine).

It belongs to the class-III pyridoxal-phosphate-dependent aminotransferase family. HemL subfamily. As to quaternary structure, homodimer. The cofactor is pyridoxal 5'-phosphate.

Its subcellular location is the cytoplasm. It carries out the reaction (S)-4-amino-5-oxopentanoate = 5-aminolevulinate. It functions in the pathway porphyrin-containing compound metabolism; protoporphyrin-IX biosynthesis; 5-aminolevulinate from L-glutamyl-tRNA(Glu): step 2/2. The sequence is that of Glutamate-1-semialdehyde 2,1-aminomutase from Wolinella succinogenes (strain ATCC 29543 / DSM 1740 / CCUG 13145 / JCM 31913 / LMG 7466 / NCTC 11488 / FDC 602W) (Vibrio succinogenes).